Here is a 428-residue protein sequence, read N- to C-terminus: Adenylosuccinate synthetase (428 aa).

GTP is bound by residues 13-19 (GDEGKGK) and 41-43 (GHT). D14 functions as the Proton acceptor in the catalytic mechanism. Residues D14 and G41 each coordinate Mg(2+). IMP is bound by residues 14–17 (DEGK), 39–42 (NAGH), T130, R144, Q223, T238, and R302. H42 serves as the catalytic Proton donor. Substrate is bound at residue 298–304 (ASTGRRR). Residues R304, 330–332 (KLD), and 412–414 (STG) contribute to the GTP site.

Belongs to the adenylosuccinate synthetase family. Homodimer. The cofactor is Mg(2+).

The protein localises to the cytoplasm. It carries out the reaction IMP + L-aspartate + GTP = N(6)-(1,2-dicarboxyethyl)-AMP + GDP + phosphate + 2 H(+). It participates in purine metabolism; AMP biosynthesis via de novo pathway; AMP from IMP: step 1/2. In terms of biological role, plays an important role in the de novo pathway of purine nucleotide biosynthesis. Catalyzes the first committed step in the biosynthesis of AMP from IMP. The polypeptide is Adenylosuccinate synthetase (Dichelobacter nodosus (strain VCS1703A)).